The chain runs to 427 residues: 3-phosphoshikimate 1-carboxyvinyltransferase (427 aa).

Positions 22, 23, and 27 each coordinate 3-phosphoshikimate. Phosphoenolpyruvate is bound at residue Lys22. The phosphoenolpyruvate site is built by Gly96 and Arg124. Residues Ser170, Ser171, Gln172, Ser198, Asp314, Asn337, and Lys341 each contribute to the 3-phosphoshikimate site. A phosphoenolpyruvate-binding site is contributed by Gln172. Asp314 acts as the Proton acceptor in catalysis. Phosphoenolpyruvate is bound by residues Arg345, Arg387, and Lys412.

This sequence belongs to the EPSP synthase family. Monomer.

The protein resides in the cytoplasm. The enzyme catalyses 3-phosphoshikimate + phosphoenolpyruvate = 5-O-(1-carboxyvinyl)-3-phosphoshikimate + phosphate. The protein operates within metabolic intermediate biosynthesis; chorismate biosynthesis; chorismate from D-erythrose 4-phosphate and phosphoenolpyruvate: step 6/7. Functionally, catalyzes the transfer of the enolpyruvyl moiety of phosphoenolpyruvate (PEP) to the 5-hydroxyl of shikimate-3-phosphate (S3P) to produce enolpyruvyl shikimate-3-phosphate and inorganic phosphate. The chain is 3-phosphoshikimate 1-carboxyvinyltransferase from Tolumonas auensis (strain DSM 9187 / NBRC 110442 / TA 4).